Here is a 79-residue protein sequence, read N- to C-terminus: Small ribosomal subunit protein bS18 (79 aa).

It belongs to the bacterial ribosomal protein bS18 family. Part of the 30S ribosomal subunit. Forms a tight heterodimer with protein bS6.

Binds as a heterodimer with protein bS6 to the central domain of the 16S rRNA, where it helps stabilize the platform of the 30S subunit. The chain is Small ribosomal subunit protein bS18 from Blochmanniella pennsylvanica (strain BPEN).